The chain runs to 704 residues: uncharacterized protein (704 aa).

This is an uncharacterized protein from Rickettsia conorii (strain ATCC VR-613 / Malish 7).